We begin with the raw amino-acid sequence, 324 residues long: Acetyl-coenzyme A carboxylase carboxyl transferase subunit beta (324 aa).

Residues 28–297 (LWCKCPSCNA…AVAPAAAKAP (270 aa)) form the CoA carboxyltransferase N-terminal domain. Residues Cys32, Cys35, Cys51, and Cys54 each coordinate Zn(2+). The C4-type zinc-finger motif lies at 32 to 54 (CPSCNAILYKSEVERNLEVCPKC).

The protein belongs to the AccD/PCCB family. As to quaternary structure, acetyl-CoA carboxylase is a heterohexamer composed of biotin carboxyl carrier protein (AccB), biotin carboxylase (AccC) and two subunits each of ACCase subunit alpha (AccA) and ACCase subunit beta (AccD). Zn(2+) serves as cofactor.

It localises to the cytoplasm. It catalyses the reaction N(6)-carboxybiotinyl-L-lysyl-[protein] + acetyl-CoA = N(6)-biotinyl-L-lysyl-[protein] + malonyl-CoA. It functions in the pathway lipid metabolism; malonyl-CoA biosynthesis; malonyl-CoA from acetyl-CoA: step 1/1. Component of the acetyl coenzyme A carboxylase (ACC) complex. Biotin carboxylase (BC) catalyzes the carboxylation of biotin on its carrier protein (BCCP) and then the CO(2) group is transferred by the transcarboxylase to acetyl-CoA to form malonyl-CoA. The protein is Acetyl-coenzyme A carboxylase carboxyl transferase subunit beta of Methylococcus capsulatus (strain ATCC 33009 / NCIMB 11132 / Bath).